The following is an 87-amino-acid chain: Small ribosomal subunit protein uS17 (87 aa).

It belongs to the universal ribosomal protein uS17 family. In terms of assembly, part of the 30S ribosomal subunit.

In terms of biological role, one of the primary rRNA binding proteins, it binds specifically to the 5'-end of 16S ribosomal RNA. This Pelotomaculum thermopropionicum (strain DSM 13744 / JCM 10971 / SI) protein is Small ribosomal subunit protein uS17.